The primary structure comprises 304 residues: Small glutamine-rich tetratricopeptide repeat-containing protein beta (304 aa).

4 TPR repeats span residues 15–49, 85–118, 119–152, and 153–186; these read LREQ…SPED, ADQL…DPNN, AVYY…DSKY, and SKAY…DPEN. Lysine 131 carries the post-translational modification N6-acetyllysine. Phosphoserine occurs at positions 293, 295, and 297.

It belongs to the SGT family. Homooligomerize.

Co-chaperone that binds directly to HSC70 and HSP70 and regulates their ATPase activity. This is Small glutamine-rich tetratricopeptide repeat-containing protein beta (SGTB) from Homo sapiens (Human).